Reading from the N-terminus, the 94-residue chain is MGFFDFFSPDKKNSAANIAKDRLQIIVRERRCCDRDPLYLSDMKRDILAVICKYVQLDPNALHVQFEQKEDDVSVLELNVILPEVSSTGDCSKP.

This sequence belongs to the MinE family.

Its function is as follows. Prevents the cell division inhibition by proteins MinC and MinD at internal division sites while permitting inhibition at polar sites. This ensures cell division at the proper site by restricting the formation of a division septum at the midpoint of the long axis of the cell. The sequence is that of Cell division topological specificity factor from Hamiltonella defensa subsp. Acyrthosiphon pisum (strain 5AT).